Here is a 357-residue protein sequence, read N- to C-terminus: MVKLFIGNLPREATEQEIRSLFEQYGKVLECDIIKNYGFVHIEDKTAAEDAIRNLHHYKLHGVNINVEASKNKSKASTKLHVGNISPTCTNQELRAKFEEYGPVIECDIVKDYAFVHMERAEDAVEAIRGLDNTEFQGKRMHVQLSTSRLRTAPGMGDQSGCYRCGKEGHWSKECPVDRTGRVADFTEQYNEQYGAVRTPYTMGYGESMYYNDAYGALDYYKRYRVRSYEAVAAAAAASAYNYAEQTMSHLPQVQSSAVPSHLNSTSVDPYDRHLLQNSGSAATSAAMAAAASSSYYGRDRSPLRRNAAVLPAVGEGYGYGPESEMSQASAATRNSLYDMARYEREQYVDRTRYSAF.

RRM domains are found at residues 2–72 (VKLF…ASKN) and 78–148 (TKLH…LSTS). The CCHC-type zinc-finger motif lies at 160–177 (SGCYRCGKEGHWSKECPV). Residues 196 to 357 (AVRTPYTMGY…YVDRTRYSAF (162 aa)) form an interaction with TNPO3 region.

Interacts with TNPO3, which may mediate nuclear import of the protein. In terms of tissue distribution, expressed in the suprachiasmatic nucleus (SCN) (at protein level). Expressed in the suprachiasmatic nucleus (SCN).

The protein localises to the nucleus. It is found in the nucleolus. Its function is as follows. Required for the translational activation of PER1 mRNA in response to circadian clock. Binds directly to the 3'-UTR of the PER1 mRNA. In Mus musculus (Mouse), this protein is RNA-binding protein 4B (Rbm4b).